A 605-amino-acid chain; its full sequence is Cell wall integrity and stress response component 4 (605 aa).

The signal sequence occupies residues 1-26 (MQTSMVSAKVSIWLVCSVICSSLVRA). The region spanning 27-110 (TQSVCSSQNT…DKDLFGYIYL (84 aa)) is the WSC domain. The segment at 151 to 305 (SPTLTSTSTT…PSSTTVTYTS (155 aa)) is disordered. Residues Asn340, Asn386, Asn389, and Asn398 are each glycosylated (N-linked (GlcNAc...) asparagine). Over residues 381–399 (RITNNNNSNTTNSNTPTNK) the composition is skewed to low complexity. A disordered region spans residues 381 to 404 (RITNNNNSNTTNSNTPTNKSTEKK). Residues 415–435 (ATFVVVGVVCLVIICILIYLI) form a helical membrane-spanning segment. Residue Asn479 is glycosylated (N-linked (GlcNAc...) asparagine). Residues 494-521 (GQIMSESPSPRQSTYSLTAGSPPNDPST) form a disordered region. Polar residues predominate over residues 497 to 521 (MSESPSPRQSTYSLTAGSPPNDPST). 2 N-linked (GlcNAc...) asparagine glycosylation sites follow: Asn553 and Asn583.

It localises to the membrane. The protein is Cell wall integrity and stress response component 4 (WSC4) of Saccharomyces cerevisiae (strain ATCC 204508 / S288c) (Baker's yeast).